The sequence spans 144 residues: Phosphomevalonate dehydratase small subunit (144 aa).

The active-site Proton acceptor is the serine 65.

This sequence belongs to the AcnX type II small subunit family. Heterodimer composed of a large subunit (PMDh-L) and a small subunit (PMDh-S).

The enzyme catalyses (R)-5-phosphomevalonate = (2E)-3-methyl-5-phosphooxypent-2-enoate + H2O. It functions in the pathway isoprenoid biosynthesis; isopentenyl diphosphate biosynthesis via mevalonate pathway. Its function is as follows. Component of a hydro-lyase that catalyzes the dehydration of mevalonate 5-phosphate (MVA5P) to form trans-anhydromevalonate 5-phosphate (tAHMP). Involved in the archaeal mevalonate (MVA) pathway, which provides fundamental precursors for isoprenoid biosynthesis, such as isopentenyl diphosphate (IPP) and dimethylallyl diphosphate (DMAPP). The chain is Phosphomevalonate dehydratase small subunit from Methanosarcina mazei (strain ATCC BAA-159 / DSM 3647 / Goe1 / Go1 / JCM 11833 / OCM 88) (Methanosarcina frisia).